The primary structure comprises 359 residues: DNA-directed RNA polymerase RPB3-11 homolog (359 aa).

In the N-terminal section; belongs to the archaeal RpoD/eukaryotic RPB3 RNA polymerase subunit family. This sequence in the C-terminal section; belongs to the archaeal RpoL/eukaryotic RPB11/RPC19 RNA polymerase subunit family. Part of the viral DNA-directed RNA polymerase that consists of 8 polII-like subunits (RPB1, RPB2, RPB3, RPB5, RPB6, RPB7, RPB9, RPB10), a capping enzyme and a termination factor.

It localises to the host cytoplasm. Its subcellular location is the virion. Functionally, component of the DNA-directed RNA polymerase (RNAP) that catalyzes the transcription in the cytoplasm of viral DNA into RNA using the four ribonucleoside triphosphates as substrates. This chain is DNA-directed RNA polymerase RPB3-11 homolog, found in Ornithodoros (relapsing fever ticks).